The chain runs to 145 residues: D-aminoacyl-tRNA deacylase (145 aa).

A Gly-cisPro motif, important for rejection of L-amino acids motif is present at residues glycine 137–proline 138.

It belongs to the DTD family. Homodimer.

It is found in the cytoplasm. It carries out the reaction glycyl-tRNA(Ala) + H2O = tRNA(Ala) + glycine + H(+). The enzyme catalyses a D-aminoacyl-tRNA + H2O = a tRNA + a D-alpha-amino acid + H(+). An aminoacyl-tRNA editing enzyme that deacylates mischarged D-aminoacyl-tRNAs. Also deacylates mischarged glycyl-tRNA(Ala), protecting cells against glycine mischarging by AlaRS. Acts via tRNA-based rather than protein-based catalysis; rejects L-amino acids rather than detecting D-amino acids in the active site. By recycling D-aminoacyl-tRNA to D-amino acids and free tRNA molecules, this enzyme counteracts the toxicity associated with the formation of D-aminoacyl-tRNA entities in vivo and helps enforce protein L-homochirality. The polypeptide is D-aminoacyl-tRNA deacylase (Teredinibacter turnerae (strain ATCC 39867 / T7901)).